A 365-amino-acid chain; its full sequence is Histidinol-phosphate aminotransferase (365 aa).

The disordered stretch occupies residues 1 to 22; that stretch reads MSRPVPNPGILDIAPYTPGKSP. At lysine 221 the chain carries N6-(pyridoxal phosphate)lysine.

Belongs to the class-II pyridoxal-phosphate-dependent aminotransferase family. Histidinol-phosphate aminotransferase subfamily. Homodimer. Pyridoxal 5'-phosphate serves as cofactor.

The enzyme catalyses L-histidinol phosphate + 2-oxoglutarate = 3-(imidazol-4-yl)-2-oxopropyl phosphate + L-glutamate. It participates in amino-acid biosynthesis; L-histidine biosynthesis; L-histidine from 5-phospho-alpha-D-ribose 1-diphosphate: step 7/9. This chain is Histidinol-phosphate aminotransferase, found in Rhodopseudomonas palustris (strain BisB5).